The chain runs to 546 residues: MAAKDVVFGGEARARMVEGVNILANAVKVTLGPKGRNVVLERSFGAPTVTKDGVSVAKEIELKDKLQNMGAQLVKEVASKTNDIAGDGTTTATVLAQAIVREGSKYVAAGLNPMDLKRGIDKAVVALVEELKKASKATTTSKEIAQVGSISANSDESVGKIIADAMDKVGKEGVITVEDGKSLENELEVVEGMQFDRGYLSPYFINNPEKQAAILDNPFVLLFDKKISNIRDLLPTLEQVAKASRPLLIIAEDVEGEALATLVVNTIRGILKVVAVKAPGFGDRRKAMLEDIAILTGGKVIAEEVGLTLEKVTLADLGQAKRIEVGKENTTIIDGAGAAADIEARVKQIRIQIEEATSDYDREKLQERVAKLAGGVAVIKVGAATEVEMKEKKARVEDALHATRAAVEEGIVAGGGVALLRAKQAVGNLSTGNPEQDAGIKLVLKAVEAPLREIVANAGGEPSVVVNEVLNGKGNYGFNAANDTYGDMLEMGILDPTKVTRTALQNAASVASLLLTTEAMVAEAPKDESAAPAMPGGMGGMGDMGM.

ATP-binding positions include 30 to 33 (TLGP), Lys-51, 87 to 91 (DGTTT), Gly-415, 479 to 481 (NAA), and Asp-495. The segment at 527 to 546 (DESAAPAMPGGMGGMGDMGM) is disordered. Over residues 536 to 546 (GGMGGMGDMGM) the composition is skewed to gly residues.

It belongs to the chaperonin (HSP60) family. In terms of assembly, forms a cylinder of 14 subunits composed of two heptameric rings stacked back-to-back. Interacts with the co-chaperonin GroES.

Its subcellular location is the cytoplasm. It carries out the reaction ATP + H2O + a folded polypeptide = ADP + phosphate + an unfolded polypeptide.. Its function is as follows. Together with its co-chaperonin GroES, plays an essential role in assisting protein folding. The GroEL-GroES system forms a nano-cage that allows encapsulation of the non-native substrate proteins and provides a physical environment optimized to promote and accelerate protein folding. The polypeptide is Chaperonin GroEL (Acidovorax sp. (strain JS42)).